The primary structure comprises 391 residues: Probable acridone synthase 3 (391 aa).

Residue Cys164 is part of the active site.

Belongs to the thiolase-like superfamily. Chalcone/stilbene synthases family.

It carries out the reaction N-methylanthraniloyl-CoA + 3 malonyl-CoA + 3 H(+) = 1,3-dihydroxy-N-methylacridone + 3 CO2 + 4 CoA + H2O. In Ruta graveolens (Common rue), this protein is Probable acridone synthase 3 (ACS3).